We begin with the raw amino-acid sequence, 147 residues long: Large ribosomal subunit protein uL22 (147 aa).

Positions 110 to 147 are disordered; the sequence is EEKKTVAKKAPAAKKTTTTKAPAKKTTSTKKATAKKES. Low complexity predominate over residues 117 to 140; the sequence is KKAPAAKKTTTTKAPAKKTTSTKK.

The protein belongs to the universal ribosomal protein uL22 family. In terms of assembly, part of the 50S ribosomal subunit.

This protein binds specifically to 23S rRNA; its binding is stimulated by other ribosomal proteins, e.g. L4, L17, and L20. It is important during the early stages of 50S assembly. It makes multiple contacts with different domains of the 23S rRNA in the assembled 50S subunit and ribosome. Its function is as follows. The globular domain of the protein is located near the polypeptide exit tunnel on the outside of the subunit, while an extended beta-hairpin is found that lines the wall of the exit tunnel in the center of the 70S ribosome. The chain is Large ribosomal subunit protein uL22 from Campylobacter jejuni subsp. jejuni serotype O:23/36 (strain 81-176).